Here is a 282-residue protein sequence, read N- to C-terminus: Shikimate dehydrogenase (NADP(+)) (282 aa).

Residues 16–18 and Thr63 contribute to the shikimate site; that span reads SLS. The Proton acceptor role is filled by Lys67. 2 residues coordinate shikimate: Asn88 and Asp103. NADP(+) is bound by residues 128–132 and Leu219; that span reads GAGGA. Tyr221 provides a ligand contact to shikimate. Residue Gly243 coordinates NADP(+).

The protein belongs to the shikimate dehydrogenase family. As to quaternary structure, homodimer.

The enzyme catalyses shikimate + NADP(+) = 3-dehydroshikimate + NADPH + H(+). The protein operates within metabolic intermediate biosynthesis; chorismate biosynthesis; chorismate from D-erythrose 4-phosphate and phosphoenolpyruvate: step 4/7. Involved in the biosynthesis of the chorismate, which leads to the biosynthesis of aromatic amino acids. Catalyzes the reversible NADPH linked reduction of 3-dehydroshikimate (DHSA) to yield shikimate (SA). The protein is Shikimate dehydrogenase (NADP(+)) of Xylella fastidiosa (strain M12).